Consider the following 135-residue polypeptide: Protein NrdI (135 aa).

It belongs to the NrdI family.

Functionally, probably involved in ribonucleotide reductase function. This chain is Protein NrdI, found in Salmonella gallinarum (strain 287/91 / NCTC 13346).